A 120-amino-acid polypeptide reads, in one-letter code: NAD(P)H-quinone oxidoreductase subunit 3 (120 aa).

The next 3 membrane-spanning stretches (helical) occupy residues 6 to 26, 64 to 84, and 89 to 109; these read GYDA…LALI, MFAL…PWAV, and LGVL…VALA.

Belongs to the complex I subunit 3 family. As to quaternary structure, NDH-1 can be composed of about 15 different subunits; different subcomplexes with different compositions have been identified which probably have different functions.

Its subcellular location is the cellular thylakoid membrane. It catalyses the reaction a plastoquinone + NADH + (n+1) H(+)(in) = a plastoquinol + NAD(+) + n H(+)(out). It carries out the reaction a plastoquinone + NADPH + (n+1) H(+)(in) = a plastoquinol + NADP(+) + n H(+)(out). Its function is as follows. NDH-1 shuttles electrons from an unknown electron donor, via FMN and iron-sulfur (Fe-S) centers, to quinones in the respiratory and/or the photosynthetic chain. The immediate electron acceptor for the enzyme in this species is believed to be plastoquinone. Couples the redox reaction to proton translocation, and thus conserves the redox energy in a proton gradient. Cyanobacterial NDH-1 also plays a role in inorganic carbon-concentration. The protein is NAD(P)H-quinone oxidoreductase subunit 3 of Parasynechococcus marenigrum (strain WH8102).